The following is a 330-amino-acid chain: Beta-hexosaminidase (330 aa).

Residues Asp62, Arg70, Arg130, and 160–161 each bind substrate; that span reads KH. Catalysis depends on His173, which acts as the Proton donor/acceptor. Asp242 functions as the Nucleophile in the catalytic mechanism.

It belongs to the glycosyl hydrolase 3 family. NagZ subfamily.

It localises to the cytoplasm. The enzyme catalyses Hydrolysis of terminal non-reducing N-acetyl-D-hexosamine residues in N-acetyl-beta-D-hexosaminides.. Its pathway is cell wall biogenesis; peptidoglycan recycling. Plays a role in peptidoglycan recycling by cleaving the terminal beta-1,4-linked N-acetylglucosamine (GlcNAc) from peptide-linked peptidoglycan fragments, giving rise to free GlcNAc, anhydro-N-acetylmuramic acid and anhydro-N-acetylmuramic acid-linked peptides. The chain is Beta-hexosaminidase from Vibrio cholerae serotype O1 (strain ATCC 39541 / Classical Ogawa 395 / O395).